We begin with the raw amino-acid sequence, 357 residues long: Protein phosphatase 1 regulatory subunit 42 (357 aa).

LRR repeat units follow at residues 29-50 (KITH…SLCR), 51-72 (NLSV…NYTT), 73-94 (NLTH…SSLK), 95-116 (KLEK…EGLE), 117-138 (ELRE…LFDP), 147-168 (SLST…EILE), and 169-190 (NLNH…ELLL). The LRRCT domain maps to 204 to 242 (NPVCLKPKYRDKLILTSKSLEFLDGKEIKDMERQFLMNW). The tract at residues 329–357 (ESSLTKNDIHEPHLLQNPKVKENLSEKKE) is disordered. The segment covering 335–357 (NDIHEPHLLQNPKVKENLSEKKE) has biased composition (basic and acidic residues).

As to quaternary structure, interacts with PPP1CC isoform gamma-2; the interaction is direct. Interacts with actin, dynein, KIF5B, KIFC1 and tubulin. Associates with microtubules. Phosphorylated; during the first round of spermatogenesis with a marginal increase at 21 days after birth. As to expression, testis-specific. Expressed in spermatids (at protein level). Testis-specific.

It is found in the cytoplasm. The protein resides in the cytoskeleton. It localises to the microtubule organizing center. The protein localises to the centrosome. Regulates phosphatase activity of protein phosphatase 1 (PP1) complexes in the testis. In Mus musculus (Mouse), this protein is Protein phosphatase 1 regulatory subunit 42 (Ppp1r42).